Reading from the N-terminus, the 302-residue chain is Ornithine carbamoyltransferase (302 aa).

Carbamoyl phosphate-binding positions include 52–55, Gln79, Arg103, and 130–133; these read STRT and HPCQ. Residues Asn161, Asp221, and 225–226 each bind L-ornithine; that span reads SM. Residues 261–262 and Arg289 each bind carbamoyl phosphate; that span reads CL.

Belongs to the aspartate/ornithine carbamoyltransferase superfamily. OTCase family.

The protein resides in the cytoplasm. It catalyses the reaction carbamoyl phosphate + L-ornithine = L-citrulline + phosphate + H(+). The protein operates within amino-acid biosynthesis; L-arginine biosynthesis; L-arginine from L-ornithine and carbamoyl phosphate: step 1/3. Reversibly catalyzes the transfer of the carbamoyl group from carbamoyl phosphate (CP) to the N(epsilon) atom of ornithine (ORN) to produce L-citrulline. This is Ornithine carbamoyltransferase from Syntrophotalea carbinolica (strain DSM 2380 / NBRC 103641 / GraBd1) (Pelobacter carbinolicus).